Reading from the N-terminus, the 222-residue chain is Cytidylate kinase (222 aa).

Position 11–19 (11–19 (GPTASGKGT)) interacts with ATP.

Belongs to the cytidylate kinase family. Type 1 subfamily.

It localises to the cytoplasm. It catalyses the reaction CMP + ATP = CDP + ADP. It carries out the reaction dCMP + ATP = dCDP + ADP. This Cupriavidus necator (strain ATCC 17699 / DSM 428 / KCTC 22496 / NCIMB 10442 / H16 / Stanier 337) (Ralstonia eutropha) protein is Cytidylate kinase.